Consider the following 886-residue polypeptide: Leucine--tRNA ligase (886 aa).

The 'HIGH' region signature appears at 46–56 (PYPSGKLHMGH). The short motif at 638–642 (TMSKS) is the 'KMSKS' region element. K641 contributes to the ATP binding site.

This sequence belongs to the class-I aminoacyl-tRNA synthetase family.

The protein resides in the cytoplasm. The enzyme catalyses tRNA(Leu) + L-leucine + ATP = L-leucyl-tRNA(Leu) + AMP + diphosphate. The sequence is that of Leucine--tRNA ligase from Polaromonas sp. (strain JS666 / ATCC BAA-500).